The following is a 331-amino-acid chain: 6-phosphogluconolactonase (331 aa).

N6-acetyllysine is present on Lys287.

It belongs to the cycloisomerase 2 family.

It carries out the reaction 6-phospho-D-glucono-1,5-lactone + H2O = 6-phospho-D-gluconate + H(+). The protein operates within carbohydrate degradation; pentose phosphate pathway; D-ribulose 5-phosphate from D-glucose 6-phosphate (oxidative stage): step 2/3. In terms of biological role, catalyzes the hydrolysis of 6-phosphogluconolactone to 6-phosphogluconate. The chain is 6-phosphogluconolactonase from Escherichia fergusonii (strain ATCC 35469 / DSM 13698 / CCUG 18766 / IAM 14443 / JCM 21226 / LMG 7866 / NBRC 102419 / NCTC 12128 / CDC 0568-73).